Here is a 110-residue protein sequence, read N- to C-terminus: MNTLLLLAALSSQITFNTTQQGDVYTIIPEVTLTQSCLCRVQILSLREGSSGQSQTKQEKTLSLPANQPIALTKLSLNISPDDRVKIVVTVSDGQSLHLSQQWPPSSEKS.

The signal sequence occupies residues 1-8; sequence MNTLLLLA.

It belongs to the CsgC/AgfC family.

The protein resides in the periplasm. In terms of biological role, plays a role in the extracellular assembly of CsgA into thin aggregative fimbriae (Tafi) fibers. Assembly may also require CsgE. Tafi are thought to be assembled via an extracellular nucleation-precipitation (ENP) pathway, and possibly also via an intracellular non-CsgC-dependent pathway. The polypeptide is Curli assembly protein CsgC (csgC) (Escherichia coli (strain K12)).